Reading from the N-terminus, the 599-residue chain is Vitamin B12-dependent ribonucleotide reductase (599 aa).

193–197 contributes to the substrate binding site; sequence PTGTI. The tract at residues 519 to 555 is disordered; that stretch reads LAQSAPRQAGPAKAATTAPAAKAQEPAAAPSPKQAHN. Low complexity predominate over residues 526–553; sequence QAGPAKAATTAPAAKAQEPAAAPSPKQA.

It belongs to the ribonucleoside diphosphate reductase class-2 family. It depends on adenosylcob(III)alamin as a cofactor.

The enzyme catalyses a 2'-deoxyribonucleoside 5'-diphosphate + [thioredoxin]-disulfide + H2O = a ribonucleoside 5'-diphosphate + [thioredoxin]-dithiol. Catalyzes the reduction of ribonucleotides to deoxyribonucleotides. May function to provide a pool of deoxyribonucleotide precursors for DNA repair during oxygen limitation and/or for immediate growth after restoration of oxygen. This Streptantibioticus cattleyicolor (Streptomyces cattleya) protein is Vitamin B12-dependent ribonucleotide reductase (nrdJ).